Reading from the N-terminus, the 364-residue chain is DNA replication and repair protein RecF (364 aa).

30-37 (GDNGAGKT) lines the ATP pocket.

It belongs to the RecF family.

It localises to the cytoplasm. Functionally, the RecF protein is involved in DNA metabolism; it is required for DNA replication and normal SOS inducibility. RecF binds preferentially to single-stranded, linear DNA. It also seems to bind ATP. In Stenotrophomonas maltophilia (strain R551-3), this protein is DNA replication and repair protein RecF.